Consider the following 172-residue polypeptide: uncharacterized protein (172 aa).

Positions 12–172 (IRLRCMEDRD…IAVYERKSYN (161 aa)) constitute an N-acetyltransferase domain.

This is an uncharacterized protein from Bacillus subtilis (strain 168).